The primary structure comprises 296 residues: Nucleotide-binding protein SSA_0810 (296 aa).

13–20 (GMSGAGKT) contributes to the ATP binding site. GTP is bound at residue 63 to 66 (DMRS). Positions 277–296 (WPVNSSHRDKNRRKETVNRS) are disordered. Residues 282-296 (SHRDKNRRKETVNRS) are compositionally biased toward basic and acidic residues.

It belongs to the RapZ-like family.

In terms of biological role, displays ATPase and GTPase activities. The sequence is that of Nucleotide-binding protein SSA_0810 from Streptococcus sanguinis (strain SK36).